The following is a 465-amino-acid chain: Cysteine--tRNA ligase (465 aa).

A Zn(2+)-binding site is contributed by cysteine 30. Positions 32–42 match the 'HIGH' region motif; sequence ITVYDYCHVGH. 3 residues coordinate Zn(2+): cysteine 214, histidine 239, and glutamate 243. Positions 271–275 match the 'KMSKS' region motif; that stretch reads KMSKS. An ATP-binding site is contributed by lysine 274.

This sequence belongs to the class-I aminoacyl-tRNA synthetase family. Monomer. The cofactor is Zn(2+).

The protein localises to the cytoplasm. It carries out the reaction tRNA(Cys) + L-cysteine + ATP = L-cysteinyl-tRNA(Cys) + AMP + diphosphate. This is Cysteine--tRNA ligase from Burkholderia cenocepacia (strain ATCC BAA-245 / DSM 16553 / LMG 16656 / NCTC 13227 / J2315 / CF5610) (Burkholderia cepacia (strain J2315)).